Here is a 322-residue protein sequence, read N- to C-terminus: UV DNA damage endonuclease (322 aa).

The protein belongs to the uve1/UvsE family.

Its function is as follows. Component in a DNA repair pathway. Removal of UV LIGHT damaged nucleotides. Recognizes pyrimidine dimers and cleave a phosphodiester bond immediately 5' to the lesion. The polypeptide is UV DNA damage endonuclease (Halalkalibacterium halodurans (strain ATCC BAA-125 / DSM 18197 / FERM 7344 / JCM 9153 / C-125) (Bacillus halodurans)).